Consider the following 426-residue polypeptide: Putative acid phosphatase 1 (426 aa).

The first 18 residues, 1 to 18, serve as a signal peptide directing secretion; sequence MRVLFYVFPFVIFALSQA. Residues 19–388 lie on the Extracellular side of the membrane; sequence QLISVHVIFR…HNWTMTTVSW (370 aa). His29 (nucleophile) is an active-site residue. Residues Asn37 and Asn145 are each glycosylated (N-linked (GlcNAc...) asparagine). Cys133 and Cys369 are oxidised to a cystine. Asp276 serves as the catalytic Proton donor. An N-linked (GlcNAc...) asparagine glycan is attached at Asn380. The chain crosses the membrane as a helical span at residues 389 to 409; sequence ILIGISAFLLIILIIMSYLAV. Topologically, residues 410–426 are cytoplasmic; sequence RYKNRSVVTIKKVCLEN.

Belongs to the histidine acid phosphatase family.

It is found in the membrane. It catalyses the reaction a phosphate monoester + H2O = an alcohol + phosphate. This is Putative acid phosphatase 1 from Caenorhabditis briggsae.